The following is a 456-amino-acid chain: Phosphomethylpyrimidine synthase (456 aa).

Substrate-binding positions include Asn-80, Met-109, Tyr-139, His-175, 195–197 (SRG), 236–239 (DSLR), and Glu-275. Residue His-279 participates in Zn(2+) binding. Tyr-302 provides a ligand contact to substrate. His-343 serves as a coordination point for Zn(2+). [4Fe-4S] cluster contacts are provided by Cys-423, Cys-426, and Cys-431.

It belongs to the ThiC family. [4Fe-4S] cluster is required as a cofactor.

It catalyses the reaction 5-amino-1-(5-phospho-beta-D-ribosyl)imidazole + S-adenosyl-L-methionine = 4-amino-2-methyl-5-(phosphooxymethyl)pyrimidine + CO + 5'-deoxyadenosine + formate + L-methionine + 3 H(+). Its pathway is cofactor biosynthesis; thiamine diphosphate biosynthesis. Its function is as follows. Catalyzes the synthesis of the hydroxymethylpyrimidine phosphate (HMP-P) moiety of thiamine from aminoimidazole ribotide (AIR) in a radical S-adenosyl-L-methionine (SAM)-dependent reaction. The protein is Phosphomethylpyrimidine synthase of Synechococcus sp. (strain ATCC 27144 / PCC 6301 / SAUG 1402/1) (Anacystis nidulans).